The chain runs to 968 residues: C-1-tetrahydrofolate synthase, cytoplasmic (968 aa).

The methylenetetrahydrofolate dehydrogenase and cyclohydrolase stretch occupies residues 1–338 (MSAQYQRFLK…ERLAKSQWAL (338 aa)). Substrate-binding positions include 86–90 (YIRMK) and 133–135 (VQM). NADP(+) contacts are provided by residues 205-207 (GRS) and S230. 305 to 309 (PGGVG) is a substrate binding site. The tract at residues 339 to 968 (QTLPLKPQRP…TETGEIEGLF (630 aa)) is formyltetrahydrofolate synthetase. 413–420 (TPLGEGKT) is an ATP binding site.

It in the N-terminal section; belongs to the tetrahydrofolate dehydrogenase/cyclohydrolase family. In the C-terminal section; belongs to the formate--tetrahydrofolate ligase family. As to quaternary structure, homodimer. As to expression, present in all tissues.

The protein resides in the cytoplasm. It catalyses the reaction (6R)-5,10-methylene-5,6,7,8-tetrahydrofolate + NADP(+) = (6R)-5,10-methenyltetrahydrofolate + NADPH. It carries out the reaction (6R)-5,10-methenyltetrahydrofolate + H2O = (6R)-10-formyltetrahydrofolate + H(+). The enzyme catalyses (6S)-5,6,7,8-tetrahydrofolate + formate + ATP = (6R)-10-formyltetrahydrofolate + ADP + phosphate. The protein operates within one-carbon metabolism; tetrahydrofolate interconversion. The polypeptide is C-1-tetrahydrofolate synthase, cytoplasmic (pug) (Drosophila melanogaster (Fruit fly)).